The chain runs to 281 residues: MAAEACVPAEFSKDEKNGSILSAFCSDIPDITSSTESPADSFLKVELELNLKLSNLVFQDPVQYVYNPLVYAWAPHENYVQTYCKSKKEVLFLGMNPGPFGMAQTGVPFGEVNHVRDWLQIEGPVSKPEVEHPKRRIRGFECPQSEVSGARFWSLFKSLCGQPETFFKHCFVHNHCPLIFMNHSGKNLTPTDLPKAQRDTLLEICDEALCQAVRVLGVKLVIGVGRFSEQRARKALMAEGIDVTVKGIMHPSPRNPQANKGWEGIVRGQLLELGVLSLLTG.

Residues Met-95, Phe-109, and Asn-174 each contribute to the substrate site. Residues 182–198 (NHSGKNLTPTDLPKAQR) form a DNA-binding region. Position 250 (His-250) interacts with substrate.

The protein belongs to the uracil-DNA glycosylase (UDG) superfamily. SMUG1 family.

Its subcellular location is the nucleus. Its function is as follows. Recognizes base lesions in the genome and initiates base excision DNA repair. Acts as a monofunctional DNA glycosylase specific for uracil (U) residues in DNA with a preference for single-stranded DNA substrates. Does not exhibit any enzymatic activity towards G/T mismatches. This is Single-strand selective monofunctional uracil DNA glycosylase (smug1) from Xenopus laevis (African clawed frog).